The primary structure comprises 132 residues: Holo-[acyl-carrier-protein] synthase (132 aa).

Mg(2+) is bound by residues D8 and E62.

The protein belongs to the P-Pant transferase superfamily. AcpS family. Mg(2+) is required as a cofactor.

Its subcellular location is the cytoplasm. The catalysed reaction is apo-[ACP] + CoA = holo-[ACP] + adenosine 3',5'-bisphosphate + H(+). In terms of biological role, transfers the 4'-phosphopantetheine moiety from coenzyme A to a Ser of acyl-carrier-protein. In Polaromonas sp. (strain JS666 / ATCC BAA-500), this protein is Holo-[acyl-carrier-protein] synthase.